The primary structure comprises 356 residues: Competence protein ComGA (356 aa).

144 to 151 lines the ATP pocket; it reads GPTGSGKT.

It belongs to the GSP E family.

The protein resides in the cell membrane. Required for uptake of DNA by competent cells. This chain is Competence protein ComGA (comGA), found in Bacillus subtilis (strain 168).